Reading from the N-terminus, the 338-residue chain is Glyceraldehyde-3-phosphate dehydrogenase (338 aa).

Residues 11–12 (TI) and glycine 111 each bind NAD(+). 140-142 (SCN) serves as a coordination point for D-glyceraldehyde 3-phosphate. Cysteine 141 serves as the catalytic Nucleophile. Arginine 169 serves as a coordination point for NAD(+). A disordered region spans residues 170–195 (GSDPSEVKKGPINSIVPNPPKVPSHH). 195-196 (HG) contributes to the D-glyceraldehyde 3-phosphate binding site. Glutamine 302 serves as a coordination point for NAD(+).

It belongs to the glyceraldehyde-3-phosphate dehydrogenase family. Homotetramer.

It is found in the cytoplasm. The enzyme catalyses D-glyceraldehyde 3-phosphate + phosphate + NADP(+) = (2R)-3-phospho-glyceroyl phosphate + NADPH + H(+). The catalysed reaction is D-glyceraldehyde 3-phosphate + phosphate + NAD(+) = (2R)-3-phospho-glyceroyl phosphate + NADH + H(+). It participates in carbohydrate degradation; glycolysis; pyruvate from D-glyceraldehyde 3-phosphate: step 1/5. This Methanobrevibacter smithii (strain ATCC 35061 / DSM 861 / OCM 144 / PS) protein is Glyceraldehyde-3-phosphate dehydrogenase.